The sequence spans 163 residues: Transcription antitermination protein NusB (163 aa).

The protein belongs to the NusB family.

Its function is as follows. Involved in transcription antitermination. Required for transcription of ribosomal RNA (rRNA) genes. Binds specifically to the boxA antiterminator sequence of the ribosomal RNA (rrn) operons. The chain is Transcription antitermination protein NusB from Chlorobium luteolum (strain DSM 273 / BCRC 81028 / 2530) (Pelodictyon luteolum).